The following is a 511-amino-acid chain: MDGMHMNSTGDNPIEIDFENYANHMNKFLMAHIICMIIAYVFILPAGIVLAMAKSKAHIPVQIVYVILTLIGYIFAHISHHKASPENYYKGNIHRPVGRFFMWITFLIAIVGITTSILKKRMLKEYQPAAEAPGAMEDPEQALQRNSLDDGAPLLPREGNSSDEYLPPQSSRRDVSSEKPSIPSISFINIRSWRTIPKKWCVLQVLRYFHRILGHLWLYVGFFESCTGIVLLAGIFKGQHIFNGLAHWIKGAIFLWYGILSFGEYLGAFSEYGWAWNVVPKQLSEKRFAKYVPTKEMVESFLLFAYGVSNVWLEHLGNTDGKWNHHDLQHASLAFMLWWAGLCGILVESKVVHRLLNATLSATLGQRRSEDSEHSENGLPSYNVFPALTVFFTGIMMSAHDQTNHVSTVIHVLWGRLLAAAAIARICTYIMLYLKPPSSPWPTRPPTEIITSFCLICGGAMFMASSYDVVNKIRLNEMSPMLIMNISVAFTCIVMGLEVMFLILKGYASSR.

3 helical membrane passes run 33–53 (IICM…LAMA), 59–79 (IPVQ…AHIS), and 97–117 (VGRF…TTSI). Phosphoserine occurs at positions 147, 161, and 162. The interval 157–180 (REGNSSDEYLPPQSSRRDVSSEKP) is disordered. 7 helical membrane-spanning segments follow: residues 216–236 (LWLY…AGIF), 249–269 (IKGA…LGAF), 297–317 (MVES…EHLG), 332–352 (SLAF…SKVV), 412–432 (VLWG…YIML), 449–469 (IITS…SYDV), and 483–503 (IMNI…MFLI).

To yeast YCR061W.

Its subcellular location is the endoplasmic reticulum membrane. This is an uncharacterized protein from Schizosaccharomyces pombe (strain 972 / ATCC 24843) (Fission yeast).